The chain runs to 70 residues: Small ribosomal subunit protein bS21 (70 aa).

The protein belongs to the bacterial ribosomal protein bS21 family.

In Delftia acidovorans (strain DSM 14801 / SPH-1), this protein is Small ribosomal subunit protein bS21.